The following is a 640-amino-acid chain: GATA zinc finger domain-containing protein 12 (640 aa).

2 disordered regions span residues 121–209 and 355–390; these read SNNI…NIPI and QQIR…HINN. Composition is skewed to low complexity over residues 122–209 and 355–379; these read NNIP…NIPI and QQIR…QHQQ. Residues 380 to 390 show a composition bias toward polar residues; that stretch reads PPTNIPQHINN. The segment at 506–531 adopts a GATA-type zinc-finger fold; the sequence is CVNCKTSDTPEWRRGPQGAKTLCNAC.

This is GATA zinc finger domain-containing protein 12 (gtaL) from Dictyostelium discoideum (Social amoeba).